A 561-amino-acid chain; its full sequence is Glucose-6-phosphate isomerase (561 aa).

D-glucose 6-phosphate-binding positions include Gly-171 to Ser-172, Ser-222 to Thr-227, Gln-366, Glu-370, His-401, and Lys-525. Glu-370 serves as the catalytic Proton donor. Active-site residues include His-401 and Lys-525.

Belongs to the GPI family. Homodimer.

The protein localises to the cytoplasm. It is found in the cytosol. The enzyme catalyses alpha-D-glucose 6-phosphate = beta-D-fructose 6-phosphate. It participates in carbohydrate degradation; glycolysis; D-glyceraldehyde 3-phosphate and glycerone phosphate from D-glucose: step 2/4. In terms of biological role, in the cytoplasm, catalyzes the conversion of glucose-6-phosphate to fructose-6-phosphate, the second step in glycolysis, and the reverse reaction during gluconeogenesis. The polypeptide is Glucose-6-phosphate isomerase (pgi-1) (Neurospora crassa (strain ATCC 24698 / 74-OR23-1A / CBS 708.71 / DSM 1257 / FGSC 987)).